The following is a 555-amino-acid chain: Inositol 1,4,5-triphosphate receptor associated 2 (555 aa).

The Cytoplasmic portion of the chain corresponds to 1 to 495 (MESTPFSGVA…LKSSIRKANK (495 aa)). Disordered regions lie at residues 84-103 (SLPLPRHTSSTDGTITSSDP) and 128-147 (RSASPTIEAQGTSPAHDNIA). A Phosphothreonine modification is found at threonine 91. The segment covering 91-102 (TSSTDGTITSSD) has biased composition (low complexity). Polar residues predominate over residues 129–142 (SASPTIEAQGTSPA). The stretch at 227–341 (TLEKRVKLEE…LEELKQVLLQ (115 aa)) forms a coiled coil. A phosphoserine mark is found at serine 363, serine 370, and serine 424. Residues 437–469 (ELKTKDDSEPSGEETVERTRKPSLSEKKNNPSK) are disordered. Over residues 451-465 (TVERTRKPSLSEKKN) the composition is skewed to basic and acidic residues. The chain crosses the membrane as a helical; Anchor for type IV membrane protein span at residues 496-516 (ALWLSIAFIVLFAALMSFLTG). Residues 517–555 (QLFQKSVDAAPTQQEDSWTSLEHILWPFTRLRHNGPPPV) lie on the Lumenal side of the membrane.

This sequence belongs to the IRAG2 family. Interacts (via coiled-coil domain) with ITPR3. Interacts with SUN1 and SUN2. Interacts with microtubules. Interacts with HCN4; regulates HCN4 channel activity. Post-translationally, the removal of the C-terminal lumenal domain occurs by proteolytic processing. Expressed at high levels in pre B-cells, mature B-cells and pre T-cells. Expressed at low levels in mature T-cells and plasma B-cells. Expressed in germinal center B-cells, splenic marginal zone cells and B-cell lymphomas. Expressed in neuronal cells in the cerebral cortex, epithelial cells in tonsil, adrenal glands, zymogen-producing cells in the stomach and epithelial cells in seminal vesicles.

The protein resides in the cytoplasm. The protein localises to the endoplasmic reticulum membrane. Its subcellular location is the nucleus envelope. It is found in the cytoskeleton. It localises to the microtubule organizing center. The protein resides in the centrosome. The protein localises to the spindle pole. Its subcellular location is the chromosome. Plays a role in the delivery of peptides to major histocompatibility complex (MHC) class I molecules; this occurs in a transporter associated with antigen processing (TAP)-independent manner. May play a role in taste signal transduction via ITPR3. May play a role during fertilization in pronucleus congression and fusion. Plays a role in maintaining nuclear shape, maybe as a component of the LINC complex and through interaction with microtubules. Plays a role in the regulation of cellular excitability by regulating the hyperpolarization-activated cyclic nucleotide-gated HCN4 channel activity. This is Inositol 1,4,5-triphosphate receptor associated 2 from Homo sapiens (Human).